A 1191-amino-acid chain; its full sequence is Putative glycoside hydrolase 22789 (1191 aa).

A compositionally biased stretch (low complexity) spans 173–187; it reads PSSSGASSVLPSPSA. The interval 173–221 is disordered; that stretch reads PSSSGASSVLPSPSAHTPDAATDANHLPNPDPASGRQELTRAGRPARKK.

The protein belongs to the glycoside hydrolase-like 3 (GHL3) family.

This chain is Putative glycoside hydrolase 22789, found in Monosiga brevicollis (Choanoflagellate).